Here is a 131-residue protein sequence, read N- to C-terminus: Profilin-A (131 aa).

This sequence belongs to the profilin family. Occurs in many kinds of cells as a complex with monomeric actin in a 1:1 ratio.

Its subcellular location is the cytoplasm. The protein localises to the cytoskeleton. In terms of biological role, binds to actin and affects the structure of the cytoskeleton. At high concentrations, profilin prevents the polymerization of actin, whereas it enhances it at low concentrations. By binding to PIP2, it inhibits the formation of IP3 and DG. May serve as a modulator in pollen germination and pollen tube growth. This Oryza sativa subsp. japonica (Rice) protein is Profilin-A.